A 152-amino-acid polypeptide reads, in one-letter code: MSQELRAIVRVGDTDLEGNKQVAYALAKIRGIGIASAYAICWKLGIDPHAVLGALPEEQINKLDWAVRNLHEVAPAWFLNRRKDPETGRDMHLIGSELVLAAKRDVDLMKKLKSWKGIRHSLGLKVRGQRTVTTGRLGAVAGVTKKKATPGK.

The protein belongs to the universal ribosomal protein uS13 family. As to quaternary structure, part of the 30S ribosomal subunit. Forms a loose heterodimer with protein S19. Forms two bridges to the 50S subunit in the 70S ribosome.

Functionally, located at the top of the head of the 30S subunit, it contacts several helices of the 16S rRNA. In the 70S ribosome it contacts the 23S rRNA (bridge B1a) and protein L5 of the 50S subunit (bridge B1b), connecting the 2 subunits; these bridges are implicated in subunit movement. The polypeptide is Small ribosomal subunit protein uS13 (Pyrobaculum arsenaticum (strain DSM 13514 / JCM 11321 / PZ6)).